Here is a 296-residue protein sequence, read N- to C-terminus: 4-hydroxy-tetrahydrodipicolinate synthase (296 aa).

T49 serves as a coordination point for pyruvate. Catalysis depends on Y137, which acts as the Proton donor/acceptor. Catalysis depends on K165, which acts as the Schiff-base intermediate with substrate. I207 provides a ligand contact to pyruvate.

It belongs to the DapA family. As to quaternary structure, homotetramer; dimer of dimers.

The protein resides in the cytoplasm. The enzyme catalyses L-aspartate 4-semialdehyde + pyruvate = (2S,4S)-4-hydroxy-2,3,4,5-tetrahydrodipicolinate + H2O + H(+). The protein operates within amino-acid biosynthesis; L-lysine biosynthesis via DAP pathway; (S)-tetrahydrodipicolinate from L-aspartate: step 3/4. Catalyzes the condensation of (S)-aspartate-beta-semialdehyde [(S)-ASA] and pyruvate to 4-hydroxy-tetrahydrodipicolinate (HTPA). The sequence is that of 4-hydroxy-tetrahydrodipicolinate synthase from Afipia carboxidovorans (strain ATCC 49405 / DSM 1227 / KCTC 32145 / OM5) (Oligotropha carboxidovorans).